Here is a 111-residue protein sequence, read N- to C-terminus: MTVAKELRQKSSEELVKLVIKLKGELLEYRFKLAHGELDKPHLINQTRRLLATILTILTERKLNWQEEQAKYKLLTKKTNEAAVNAWKQHLEANKAKLLKSRAKREDASKK.

Residues 1–85 (MTVAKELRQK…TKKTNEAAVN (85 aa)) form a large ribosomal subunit protein uL29 region. The tract at residues 86-111 (AWKQHLEANKAKLLKSRAKREDASKK) is unknown.

This sequence belongs to the universal ribosomal protein uL29 family.

The sequence is that of Large ribosomal subunit protein uL29 from Mycoplasma pneumoniae (strain ATCC 29342 / M129 / Subtype 1) (Mycoplasmoides pneumoniae).